The following is a 473-amino-acid chain: Ribosomal protein uS12 methylthiotransferase RimO (473 aa).

The 112-residue stretch at Ala-30 to Arg-141 folds into the MTTase N-terminal domain. [4Fe-4S] cluster contacts are provided by Cys-39, Cys-75, Cys-104, Cys-179, Cys-183, and Cys-186. Residues Thr-165–Arg-394 form the Radical SAM core domain. The region spanning Arg-397–Ala-463 is the TRAM domain.

The protein belongs to the methylthiotransferase family. RimO subfamily. Requires [4Fe-4S] cluster as cofactor.

Its subcellular location is the cytoplasm. It carries out the reaction L-aspartate(89)-[ribosomal protein uS12]-hydrogen + (sulfur carrier)-SH + AH2 + 2 S-adenosyl-L-methionine = 3-methylsulfanyl-L-aspartate(89)-[ribosomal protein uS12]-hydrogen + (sulfur carrier)-H + 5'-deoxyadenosine + L-methionine + A + S-adenosyl-L-homocysteine + 2 H(+). In terms of biological role, catalyzes the methylthiolation of an aspartic acid residue of ribosomal protein uS12. The polypeptide is Ribosomal protein uS12 methylthiotransferase RimO (Synechococcus sp. (strain JA-2-3B'a(2-13)) (Cyanobacteria bacterium Yellowstone B-Prime)).